The primary structure comprises 260 residues: Transcription repressor OFP13 (260 aa).

One can recognise an OVATE domain in the interval 150 to 211 (VAMESEDPYG…VSAFVDLLSG (62 aa)).

As to expression, expressed in roots, rosette and cauline leaves, shoots, stems, flower buds and siliques.

Its subcellular location is the nucleus. Its function is as follows. Transcriptional repressor that regulates multiple aspects of plant growth and development through the regulation of BEL1-LIKE (BLH) and KNOX TALE (KNAT) homeodomain transcription factors. This chain is Transcription repressor OFP13 (OFP13), found in Arabidopsis thaliana (Mouse-ear cress).